A 270-amino-acid chain; its full sequence is D-aminoacyl-tRNA deacylase (270 aa).

The protein belongs to the DtdA deacylase family. In terms of assembly, monomer. Zn(2+) serves as cofactor.

It catalyses the reaction a D-aminoacyl-tRNA + H2O = a tRNA + a D-alpha-amino acid + H(+). The catalysed reaction is glycyl-tRNA(Ala) + H2O = tRNA(Ala) + glycine + H(+). Functionally, D-aminoacyl-tRNA deacylase with broad substrate specificity. By recycling D-aminoacyl-tRNA to D-amino acids and free tRNA molecules, this enzyme counteracts the toxicity associated with the formation of D-aminoacyl-tRNA entities in vivo. This Pyrococcus furiosus (strain ATCC 43587 / DSM 3638 / JCM 8422 / Vc1) protein is D-aminoacyl-tRNA deacylase.